The chain runs to 359 residues: Zinc finger CCCH domain-containing protein 20 (359 aa).

C3H1-type zinc fingers lie at residues Thr-75 to Glu-107, Tyr-119 to Phe-145, and Arg-153 to Asp-177. Disordered stretches follow at residues Ser-207–Ser-226 and Met-334–Met-359.

The polypeptide is Zinc finger CCCH domain-containing protein 20 (Arabidopsis thaliana (Mouse-ear cress)).